The chain runs to 348 residues: Phosphoribosylformylglycinamidine cyclo-ligase (348 aa).

The protein belongs to the AIR synthase family.

It localises to the cytoplasm. The catalysed reaction is 2-formamido-N(1)-(5-O-phospho-beta-D-ribosyl)acetamidine + ATP = 5-amino-1-(5-phospho-beta-D-ribosyl)imidazole + ADP + phosphate + H(+). The protein operates within purine metabolism; IMP biosynthesis via de novo pathway; 5-amino-1-(5-phospho-D-ribosyl)imidazole from N(2)-formyl-N(1)-(5-phospho-D-ribosyl)glycinamide: step 2/2. The protein is Phosphoribosylformylglycinamidine cyclo-ligase of Sorangium cellulosum (strain So ce56) (Polyangium cellulosum (strain So ce56)).